The primary structure comprises 128 residues: MFHLKAFSQYYSFCKMDLIFKHNSFLDRSEEISLCMHIKWYFSSGYFHWSLITQNYIIFLFLFPFKFSMHSCSSRIWGKPLYKFENRHNPFSSLFMSHIPVLTVISYCVCCLSCFFDTCKSVLYCSTS.

A run of 2 helical transmembrane segments spans residues 45–65 and 95–115; these read GYFH…LFPF and FMSH…LSCF.

Its subcellular location is the membrane. This is an uncharacterized protein from Saccharomyces cerevisiae (strain ATCC 204508 / S288c) (Baker's yeast).